Reading from the N-terminus, the 639-residue chain is MTTSTAAKRTKSGCWTCRLRRKKCNEGGPPCDNCEARGIHCHGYGPRPQWKDRGALEREEARKLQYQSGRGRSYSRSSSTAAAAAPKPAEGAMVTGGSSSSSRGSGSSIYVGGNGLGGAQEEQHGDNNAPFSAGTGNFEYQANPAPGMSPLMSDINLALDAHAMDPLDFNIDFSSTPSSAVDKSSSTSADSPSFTSIECSQFPIFSPELPVDTPVALFPQVAPIPPGLPGRESVPVAACTDLVISHGLLLAEMDRPVGQRHGQVMAEGEKGIELMMRCPPAPRAPRLEGQGRSAHILLFVRDWYAASSWRIWSGNIQDCQNHIDAAASLLLEHETALVGEAHRLSNMERKALAFFTVRLIWNDVLLSSTRRTVPKAEMVYRRLLLADSNSRGGDSHTTTSTTGPTTTTPLLAASTFWDLTGCEGAVLLAMLDASILSAWRLGEEASGSLSIRALVGRADKIEAVVEGEIARLSSLLPRSPEKTSSASGKPSHGRKTGPENEVTVATVHSLIFAHAILTDLHQTVSGPRASVPEIGDSISRAISSAWNLWQEQQQQGAGLGLERILAWPYCVAASLAKGDQREVFREIIARTENGDGSSSGGDVQQLKSIVEQCWATSSSNHRDWKDVVQRSNQFGVFLI.

Positions Cys14 to Cys41 form a DNA-binding region, zn(2)-C6 fungal-type. Disordered regions lie at residues Arg58–Gly136 and Leu476–Glu499. Over residues Ser68–Ser108 the composition is skewed to low complexity.

The protein resides in the nucleus. Functionally, transcription factor; part of the gene cluster that mediates the biosynthesis of the phomopsins, a group of hexapeptide mycotoxins which infects lupins and causes lupinosis disease in livestock. May play a role in the regulation of the production of phomopsins. This Diaporthe leptostromiformis (Lupinosis disease fungus) protein is Transcription factor phomR'.